Here is a 216-residue protein sequence, read N- to C-terminus: Peptide methionine sulfoxide reductase MsrA (216 aa).

The active site involves C54.

Belongs to the MsrA Met sulfoxide reductase family.

It catalyses the reaction L-methionyl-[protein] + [thioredoxin]-disulfide + H2O = L-methionyl-(S)-S-oxide-[protein] + [thioredoxin]-dithiol. The catalysed reaction is [thioredoxin]-disulfide + L-methionine + H2O = L-methionine (S)-S-oxide + [thioredoxin]-dithiol. Functionally, has an important function as a repair enzyme for proteins that have been inactivated by oxidation. Catalyzes the reversible oxidation-reduction of methionine sulfoxide in proteins to methionine. In Xanthomonas campestris pv. phaseoli, this protein is Peptide methionine sulfoxide reductase MsrA.